The sequence spans 287 residues: MHRLMGVNSTAAAAAGQPNVSCTCNCKRSLFQSMEITELEFVQIIIIVVVMMVMVVVITCLLSHYKLSARSFISRHSQGRRREDALSSEGCLWPSESTVSGNGIPEPQVYAPPRPTDRLAVPPFAQRERFHRFQPTYPYLQHEIDLPPTISLSDGEEPPPYQGPCTLQLRDPEQQLELNRESVRAPPNRTIFDSDLMDSARLGGPCPPSSNSGISATCYGSGGRMEGPPPTYSEVIGHYPGSSFQHQQSSGPPSLLEGTRLHHTHIAPLESAAIWSKEKDKQKGHPL.

The Lumenal portion of the chain corresponds to 1-40 (MHRLMGVNSTAAAAAGQPNVSCTCNCKRSLFQSMEITELE). The chain crosses the membrane as a helical span at residues 41–63 (FVQIIIIVVVMMVMVVVITCLLS). At 64–287 (HYKLSARSFI…EKDKQKGHPL (224 aa)) the chain is on the cytoplasmic side. A PPxY motif 1 motif is present at residues 158–161 (PPPY). Residues 186–189 (PPNR) carry the SMAD interaction motif (SIM) motif. Positions 229-232 (PPTY) match the PPxY motif 2 motif. The tract at residues 239–258 (YPGSSFQHQQSSGPPSLLEG) is disordered. The span at 242-252 (SSFQHQQSSGP) shows a compositional bias: polar residues.

Belongs to the PMEPA1 family. In terms of assembly, interacts with NEDD4 (via PPxY motifs). Interacts with AR. Interacts with LDLRAD4. Interacts (via the SMAD interaction motif) with SMAD2 and SMAD3. As to expression, highest expression in prostate. Also expressed in ovary.

The protein resides in the early endosome membrane. It localises to the golgi apparatus membrane. Functions as a negative regulator of TGF-beta signaling and thereby probably plays a role in cell proliferation, differentiation, apoptosis, motility, extracellular matrix production and immunosuppression. In the canonical TGF-beta pathway, ZFYVE9/SARA recruits the intracellular signal transducer and transcriptional modulators SMAD2 and SMAD3 to the TGF-beta receptor. Phosphorylated by the receptor, SMAD2 and SMAD3 then form a heteromeric complex with SMAD4 that translocates to the nucleus to regulate transcription. Through interaction with SMAD2 and SMAD3, LDLRAD4 may compete with ZFYVE9 and SMAD4 and prevent propagation of the intracellular signal. Also involved in down-regulation of the androgen receptor (AR), enhancing ubiquitination and proteasome-mediated degradation of AR, probably by recruiting NEDD4. The polypeptide is Protein TMEPAI (PMEPA1) (Homo sapiens (Human)).